Consider the following 23-residue polypeptide: Caerin-4.2 (23 aa).

In terms of tissue distribution, expressed by the skin parotoid and/or rostral glands.

Its subcellular location is the secreted. Antibacterial peptide, that adopts an alpha helical conformation which can disrupt bacterial membranes. Each caerin displays a different antimicrobial specificity. This chain is Caerin-4.2, found in Ranoidea caerulea (Green tree frog).